A 141-amino-acid polypeptide reads, in one-letter code: Large-conductance mechanosensitive channel (141 aa).

2 helical membrane-spanning segments follow: residues 21 to 41 (VGVIIGGAFGKIVDSIVGDLI) and 85 to 105 (GSFLTILVNFIILAFIIFMMV).

Belongs to the MscL family. As to quaternary structure, homopentamer.

The protein resides in the cell inner membrane. Channel that opens in response to stretch forces in the membrane lipid bilayer. May participate in the regulation of osmotic pressure changes within the cell. The polypeptide is Large-conductance mechanosensitive channel (Dechloromonas aromatica (strain RCB)).